The sequence spans 545 residues: Glucose-6-phosphate isomerase (545 aa).

E351 (proton donor) is an active-site residue. Catalysis depends on residues H382 and K510.

The protein belongs to the GPI family.

The protein resides in the cytoplasm. It carries out the reaction alpha-D-glucose 6-phosphate = beta-D-fructose 6-phosphate. The protein operates within carbohydrate biosynthesis; gluconeogenesis. It functions in the pathway carbohydrate degradation; glycolysis; D-glyceraldehyde 3-phosphate and glycerone phosphate from D-glucose: step 2/4. Functionally, catalyzes the reversible isomerization of glucose-6-phosphate to fructose-6-phosphate. The sequence is that of Glucose-6-phosphate isomerase from Shewanella sp. (strain MR-7).